A 350-amino-acid chain; its full sequence is Probable L-aspartate decarboxylase (350 aa).

Position 206 is an N6-(pyridoxal phosphate)lysine (Lys-206).

The protein belongs to the group II decarboxylase family. MfnA subfamily. Requires pyridoxal 5'-phosphate as cofactor.

It carries out the reaction L-aspartate + H(+) = beta-alanine + CO2. It functions in the pathway cofactor biosynthesis; coenzyme A biosynthesis. In terms of biological role, catalyzes the decarboxylation of L-aspartate to produce beta-alanine. This Haloarcula marismortui (strain ATCC 43049 / DSM 3752 / JCM 8966 / VKM B-1809) (Halobacterium marismortui) protein is Probable L-aspartate decarboxylase.